A 301-amino-acid polypeptide reads, in one-letter code: Cilia- and flagella-associated protein 161 (301 aa).

The protein resides in the cytoplasm. It is found in the cytoskeleton. The protein localises to the cilium axoneme. Microtubule inner protein (MIP) part of the dynein-decorated doublet microtubules (DMTs) in cilia axoneme, which is required for motile cilia beating. The protein is Cilia- and flagella-associated protein 161 of Danio rerio (Zebrafish).